The sequence spans 174 residues: Flavodoxin (174 aa).

Positions 4-166 (IGIFFGSDTG…RIIQWTKKIK (163 aa)) constitute a Flavodoxin-like domain.

It belongs to the flavodoxin family. It depends on FMN as a cofactor.

Low-potential electron donor to a number of redox enzymes. In Buchnera aphidicola subsp. Baizongia pistaciae (strain Bp), this protein is Flavodoxin (fldA).